Here is a 730-residue protein sequence, read N- to C-terminus: Elongation factor 2 (730 aa).

The tr-type G domain occupies 19–260 (QRIRNIGIVA…MVIHFLPNPL (242 aa)). Residues 28-35 (AHIDHGKT), 94-98 (DTPGH), and 148-151 (NKVD) each bind GTP. Diphthamide is present on His-596.

The protein belongs to the TRAFAC class translation factor GTPase superfamily. Classic translation factor GTPase family. EF-G/EF-2 subfamily.

The protein resides in the cytoplasm. Catalyzes the GTP-dependent ribosomal translocation step during translation elongation. During this step, the ribosome changes from the pre-translocational (PRE) to the post-translocational (POST) state as the newly formed A-site-bound peptidyl-tRNA and P-site-bound deacylated tRNA move to the P and E sites, respectively. Catalyzes the coordinated movement of the two tRNA molecules, the mRNA and conformational changes in the ribosome. The sequence is that of Elongation factor 2 from Methanosarcina mazei (strain ATCC BAA-159 / DSM 3647 / Goe1 / Go1 / JCM 11833 / OCM 88) (Methanosarcina frisia).